The primary structure comprises 579 residues: uncharacterized protein (579 aa).

The next 11 membrane-spanning stretches (helical) occupy residues 13-35, 39-61, 66-83, 93-110, 130-152, 162-181, 201-223, 238-257, 264-286, 296-315, and 324-346; these read DLIK…IPWI, SISR…LLLN, ANGL…AFYF, AYWG…TYPL, LAIV…IEYL, IVPK…FFLI, LIVN…LYLA, YIIM…RLLL, GFYR…GIHT, IRVM…LFSM, and LFSL…YYLA.

It is found in the cell membrane. This is an uncharacterized protein from Pasteurella multocida (strain Pm70).